The chain runs to 357 residues: NAD-dependent protein deacetylase HST2 (357 aa).

Ser-2 carries the N-acetylserine modification. In terms of domain architecture, Deacetylase sirtuin-type spans 5-284 (TASTEMSVRK…EQLVEELGWQ (280 aa)). Residues 32 to 52 (GAGI…TGLY) and 115 to 118 (QNID) contribute to the NAD(+) site. The Proton acceptor role is filled by His-135. Zn(2+) contacts are provided by Cys-143, Cys-146, Cys-170, and Cys-173. NAD(+)-binding positions include 223 to 225 (GTS), 248 to 250 (NLE), and Ser-270. The span at 317–329 (LDQSEHESADKKD) shows a compositional bias: basic and acidic residues. Residues 317 to 357 (LDQSEHESADKKDKKLQRLNGHDSDEDGASNSSSSQKAAKE) are disordered. Phosphoserine is present on Ser-340.

The protein belongs to the sirtuin family. Class I subfamily. Homotrimer. Monomer. Homotrimeric in its unliganded state. Undergoes a trimer-monomer transition upon acetyl-lysine substrate binding. It depends on Zn(2+) as a cofactor.

It localises to the cytoplasm. The protein resides in the nucleus. It catalyses the reaction N(6)-acetyl-L-lysyl-[protein] + NAD(+) + H2O = 2''-O-acetyl-ADP-D-ribose + nicotinamide + L-lysyl-[protein]. With respect to regulation, inhibited by ADP-ribose and nicotinamide. NAD-dependent histone deacetylase that is involved in nuclear silencing events. Derepresses subtelomeric silencing and increases repression in nucleolar (rDNA) silencing. Its function is negatively regulated by active nuclear export. The sequence is that of NAD-dependent protein deacetylase HST2 (HST2) from Saccharomyces cerevisiae (strain ATCC 204508 / S288c) (Baker's yeast).